Here is a 315-residue protein sequence, read N- to C-terminus: Prephenate dehydratase (315 aa).

One can recognise a Prephenate dehydratase domain in the interval 3–189; sequence RIAYLGPEGT…ARTRFLLIGV (187 aa). An ACT domain is found at 203-280; the sequence is SAVLRIANVP…ADVRYLGSWP (78 aa).

Homodimer.

It carries out the reaction prephenate + H(+) = 3-phenylpyruvate + CO2 + H2O. It functions in the pathway amino-acid biosynthesis; L-phenylalanine biosynthesis; phenylpyruvate from prephenate: step 1/1. This chain is Prephenate dehydratase (pheA), found in Mycobacterium ulcerans (strain Agy99).